Here is a 512-residue protein sequence, read N- to C-terminus: Maturase K (512 aa).

Belongs to the intron maturase 2 family. MatK subfamily.

It localises to the plastid. The protein localises to the chloroplast. In terms of biological role, usually encoded in the trnK tRNA gene intron. Probably assists in splicing its own and other chloroplast group II introns. The sequence is that of Maturase K from Erythranthe guttata (Yellow monkey flower).